We begin with the raw amino-acid sequence, 496 residues long: Xylulose kinase (496 aa).

83–84 serves as a coordination point for substrate; the sequence is MH. Aspartate 237 acts as the Proton acceptor in catalysis.

This sequence belongs to the FGGY kinase family.

It carries out the reaction D-xylulose + ATP = D-xylulose 5-phosphate + ADP + H(+). Its function is as follows. Catalyzes the phosphorylation of D-xylulose to D-xylulose 5-phosphate. This is Xylulose kinase from Staphylococcus epidermidis (strain ATCC 12228 / FDA PCI 1200).